A 248-amino-acid polypeptide reads, in one-letter code: MARTFFIGGNFKMNGSKASIKEIVDRLNGASIPSNVEVVIAPPAIYLDHAVALNKRKEVKISAQNAYSKASGAYTGENSVEQIKDVGAEWVILGHSERRTYFNETDEIVAEKTKFALDSGVKVILCIGETLEEKQQNITLQVVQRQLQAVLEKVQDWTNVVVAYEPVWAIGTGLAATAEDAQDIHHSIREFLAEKLSRDVADSVRILYGGSANGKNAVTFKDKADVDGFLVGGASLKPEFVDIINSRV.

Residues Asn-10 and Lys-12 each coordinate substrate. His-95 (electrophile) is an active-site residue. Glu-165 acts as the Proton acceptor in catalysis.

It belongs to the triosephosphate isomerase family. In terms of assembly, homodimer.

It carries out the reaction D-glyceraldehyde 3-phosphate = dihydroxyacetone phosphate. It functions in the pathway carbohydrate biosynthesis; gluconeogenesis. The protein operates within carbohydrate degradation; glycolysis; D-glyceraldehyde 3-phosphate from glycerone phosphate: step 1/1. This is Triosephosphate isomerase (TPI1) from Kluyveromyces lactis (strain ATCC 8585 / CBS 2359 / DSM 70799 / NBRC 1267 / NRRL Y-1140 / WM37) (Yeast).